The primary structure comprises 580 residues: YTH domain-containing family protein 2 (580 aa).

Residues 1 to 45 (MSASSLLEQRPKGQGNKVQNGSVHQKDGLNDDDFEPYLSPQARPN) form a disordered region. Residue Ser-2 is modified to N-acetylserine. Phosphoserine occurs at positions 2, 4, 5, 22, 39, and 196. Residues 2–385 (SASSLLEQRP…QAGSGSTPSE (384 aa)) form a localization to mRNA processing bodies (P-bodies) region. Positions 247–388 (AKQQPKLKTK…SGSTPSEPHP (142 aa)) are disordered. A compositionally biased stretch (polar residues) spans 291-317 (ALVQNIGQQPTQGSPQPVGQQANNSPP). A compositionally biased stretch (low complexity) spans 338–350 (AQLSVQQQAAQPT). The residue at position 360 (Ser-360) is a Phosphoserine. Gly residues predominate over residues 360–372 (SGFGHNGVDGNGV). Positions 373-384 (GQTQAGSGSTPS) are enriched in polar residues. The segment at 386 to 580 (PHPVLEKLRS…VKKERQGRGK (195 aa)) is interaction with m6A-containing mRNAs. Residue Ser-395 is modified to Phosphoserine. The 135-residue stretch at 411-545 (GRVFIIKSYS…EKAKQVLKII (135 aa)) folds into the YTH domain. RNA is bound by residues 417–419 (KSY), Asp-423, 433–434 (WC), Asn-463, Trp-487, and Trp-492.

Belongs to the YTHDF family. YTHDF2 subfamily. Interacts with CNOT1; interaction is direct and promotes recruitment of the CCR4-NOT complex. Interacts with YTHDF3. Interacts with RIDA/HRSP12; interaction leads to recruitment of the ribonuclease P/MRP complex. Ubiquitinated by the SCF(SKP2) complex, leading to its degradation.

It is found in the cytoplasm. The protein resides in the cytosol. Its subcellular location is the P-body. It localises to the stress granule. The protein localises to the nucleus. Specifically recognizes and binds N6-methyladenosine (m6A)-containing RNAs, and regulates their stability. M6A is a modification present at internal sites of mRNAs and some non-coding RNAs and plays a role in mRNA stability and processing. Acts as a regulator of mRNA stability by promoting degradation of m6A-containing mRNAs via interaction with the CCR4-NOT and ribonuclease P/MRP complexes, depending on the context. The YTHDF paralogs (YTHDF1, YTHDF2 and YTHDF3) share m6A-containing mRNAs targets and act redundantly to mediate mRNA degradation and cellular differentiation. M6A-containing mRNAs containing a binding site for RIDA/HRSP12 (5'-GGUUC-3') are preferentially degraded by endoribonucleolytic cleavage: cooperative binding of RIDA/HRSP12 and YTHDF2 to transcripts leads to recruitment of the ribonuclease P/MRP complex. Other m6A-containing mRNAs undergo deadenylation via direct interaction between YTHDF2 and CNOT1, leading to recruitment of the CCR4-NOT and subsequent deadenylation of m6A-containing mRNAs. Required maternally to regulate oocyte maturation: probably acts by binding to m6A-containing mRNAs, thereby regulating maternal transcript dosage during oocyte maturation, which is essential for the competence of oocytes to sustain early zygotic development. Also required during spermatogenesis: regulates spermagonial adhesion by promoting degradation of m6A-containing transcripts coding for matrix metallopeptidases. Also involved in hematopoietic stem cells specification by binding to m6A-containing mRNAs, leading to promote their degradation. Also acts as a regulator of neural development by promoting m6A-dependent degradation of neural development-related mRNA targets. Inhibits neural specification of induced pluripotent stem cells by binding to methylated neural-specific mRNAs and promoting their degradation, thereby restraining neural differentiation. Regulates circadian regulation of hepatic lipid metabolism: acts by promoting m6A-dependent degradation of PPARA transcripts. Regulates the innate immune response to infection by inhibiting the type I interferon response: acts by binding to m6A-containing IFNB transcripts and promoting their degradation. May also act as a promoter of cap-independent mRNA translation following heat shock stress: upon stress, relocalizes to the nucleus and specifically binds mRNAs with some m6A methylation mark at their 5'-UTR, protecting demethylation of mRNAs by FTO, thereby promoting cap-independent mRNA translation. Regulates mitotic entry by promoting the phase-specific m6A-dependent degradation of WEE1 transcripts. Promotes formation of phase-separated membraneless compartments, such as P-bodies or stress granules, by undergoing liquid-liquid phase separation upon binding to mRNAs containing multiple m6A-modified residues: polymethylated mRNAs act as a multivalent scaffold for the binding of YTHDF proteins, juxtaposing their disordered regions and thereby leading to phase separation. The resulting mRNA-YTHDF complexes then partition into different endogenous phase-separated membraneless compartments, such as P-bodies, stress granules or neuronal RNA granules. May also recognize and bind RNAs modified by C5-methylcytosine (m5C) and act as a regulator of rRNA processing. The sequence is that of YTH domain-containing family protein 2 from Bos taurus (Bovine).